A 398-amino-acid chain; its full sequence is Ureide permease 2 (398 aa).

The Extracellular portion of the chain corresponds to 1–10; sequence MYLVESKGGA. The helical transmembrane segment at 11–31 threads the bilayer; that stretch reads IACMLLALLSLGTWPAVLTLL. At 32 to 44 the chain is on the cytoplasmic side; it reads ERRGRLPQHTYLD. Residues 45–65 form a helical membrane-spanning segment; the sequence is YSITNLLAAIIIAFTFGQIGS. The Extracellular portion of the chain corresponds to 66 to 81; that stretch reads TKPDSPNFITQLAQDN. The chain crosses the membrane as a helical span at residues 82–102; the sequence is WPSVMFAMAGGIVLSLGNLST. At 103–104 the chain is on the cytoplasmic side; the sequence is QY. A helical transmembrane segment spans residues 105-125; that stretch reads AWALVGLSVTEVITSSITVVI. At 126–139 the chain is on the extracellular side; the sequence is GSTLNYFLDDKINK. The chain crosses the membrane as a helical span at residues 140 to 160; that stretch reads AEILFPGVACFLIAVCLGSAV. Residues 161 to 229 are Cytoplasmic-facing; that stretch reads HRSNADDNKA…RAIKVFGKRK (69 aa). The segment at 176-200 is disordered; the sequence is ETAKQEASGPSTEIGTNSSKDLETN. Residues 183–200 show a composition bias toward polar residues; the sequence is SGPSTEIGTNSSKDLETN. 221–228 contacts ATP; it reads AIKVFGKR. The chain crosses the membrane as a helical span at residues 230–250; the sequence is IIGLAITFFAGLCFSLFSPAF. The Extracellular portion of the chain corresponds to 251–272; that stretch reads NLATNDQWNRLKQGVPKLVVYT. A helical transmembrane segment spans residues 273 to 293; the sequence is AFFYFSVSCFIIALILNVVFL. Topologically, residues 294–315 are cytoplasmic; sequence YYPVLGLPKSSFKAYLNDWNGR. The helical transmembrane segment at 316–336 threads the bilayer; sequence YWAFLAGFLCGFGNGLQFMGG. The Extracellular portion of the chain corresponds to 337–341; that stretch reads QAAGY. Residues 342-362 traverse the membrane as a helical segment; it reads AAADSVQALPLVSTFWGVVLF. Over 363–371 the chain is Cytoplasmic; the sequence is GEYRRSSRK. The chain crosses the membrane as a helical span at residues 372–392; the sequence is TYLLLFCMLFMFISAVAVLMA. At 393–398 the chain is on the extracellular side; it reads SSGHRK.

This sequence belongs to the plant ureide permease (TC 2.A.7.19) family. Expressed in root xylem, cotyledons and leaves. Expressed in leaf blades, petioles, trichomes, stems, flower stigma, the upper part of pedicels, sepals, and the top and bottom parts of carpels in siliques.

It localises to the membrane. Functionally, proton-coupled transporter that transports a wide spectrum of oxo derivatives of heterocyclic nitrogen compounds, including allantoin, uric acid and xanthine, but not adenine. Mediates high affinity transport of uracil and 5-fluorouracil (a toxic uracil analog). Mediates transport of free pyrimidines and may function during early seedling development in salvage pathways, by the utilization of pyrimidines from seed storage tissue. This chain is Ureide permease 2, found in Arabidopsis thaliana (Mouse-ear cress).